We begin with the raw amino-acid sequence, 208 residues long: Protein TIC 20-II, chloroplastic (208 aa).

The N-terminal 49 residues, 1 to 49 (MASLCLSLHQTLTNPLSAPRCRPLSLSFPGSSTFSIRPSSRRATALTTR), are a transit peptide targeting the chloroplast. Transmembrane regions (helical) follow at residues 61–83 (VISI…FLFA), 101–121 (LYRS…LGVV), 134–154 (AMQA…TRIL), and 172–192 (TGVF…SLLG).

Belongs to the Tic20 family. In terms of assembly, part of the Tic complex. As to expression, expressed in leaves, siliques and roots.

It is found in the plastid. Its subcellular location is the chloroplast inner membrane. Functionally, may be involved in protein precursor import into chloroplasts. Not redundant with TIC20-I, TIC20-IV or TIC20-V. The sequence is that of Protein TIC 20-II, chloroplastic (TIC20-II) from Arabidopsis thaliana (Mouse-ear cress).